The following is a 245-amino-acid chain: 6-carboxyhexanoate--CoA ligase (245 aa).

This sequence belongs to the BioW family. As to quaternary structure, homodimer. It depends on Mg(2+) as a cofactor.

The catalysed reaction is heptanedioate + ATP + CoA = 6-carboxyhexanoyl-CoA + AMP + diphosphate. It functions in the pathway metabolic intermediate metabolism; pimeloyl-CoA biosynthesis; pimeloyl-CoA from pimelate: step 1/1. Its function is as follows. Catalyzes the transformation of pimelate into pimeloyl-CoA with concomitant hydrolysis of ATP to AMP. This Methanococcus vannielii (strain ATCC 35089 / DSM 1224 / JCM 13029 / OCM 148 / SB) protein is 6-carboxyhexanoate--CoA ligase.